A 338-amino-acid polypeptide reads, in one-letter code: Dihydroorotate dehydrogenase (quinone) (338 aa).

FMN is bound by residues 68-72 (AGMDK) and Thr-92. Residue Lys-72 participates in substrate binding. 117-121 (NRMGF) contacts substrate. FMN-binding residues include Ser-147 and Asn-180. Substrate is bound at residue Asn-180. Ser-183 acts as the Nucleophile in catalysis. Residue Asn-185 participates in substrate binding. Positions 214 and 242 each coordinate FMN. Substrate is bound at residue 243–244 (NT). FMN is bound by residues Gly-267, Gly-296, and 317 to 318 (YT).

Belongs to the dihydroorotate dehydrogenase family. Type 2 subfamily. In terms of assembly, monomer. The cofactor is FMN.

It localises to the cell membrane. It catalyses the reaction (S)-dihydroorotate + a quinone = orotate + a quinol. Its pathway is pyrimidine metabolism; UMP biosynthesis via de novo pathway; orotate from (S)-dihydroorotate (quinone route): step 1/1. Catalyzes the conversion of dihydroorotate to orotate with quinone as electron acceptor. This chain is Dihydroorotate dehydrogenase (quinone), found in Salinispora arenicola (strain CNS-205).